A 406-amino-acid chain; its full sequence is MGPIKTIKKKKRAEKKVDRNVLLAATAAATSASAAAALNNNDDDDDSSSQSLDWWDGFSRRIYGGSTDPKTFESVFKISRKTFDYICSLVKADFTAKPANFSDSNGNPLSLNDRVAVALRRLGSGESLSVIGETFGMNQSTVSQITWRFVESMEERAIHHLSWPSKLDEIKSKFEKISGLPNCCGAIDITHIVMNLPAVEPSNKVWLDGEKNFSMTLQAVVDPDMRFLDVIAGWPGSLNDDVVLKNSGFYKLVEKGKRLNGEKLPLSERTELREYIVGDSGFPLLPWLLTPYQGKPTSLPQTEFNKRHSEATKAAQMALSKLKDRWRIINGVMWMPDRNRLPRIIFVCCLLHNIIIDMEDQTLDDQPLSQQHDMNYRQRSCKLADEASSVLRDELSDQLCGKNSSA.

A Nuclear localization signal motif is present at residues 8-15 (KKKKRAEK). Residues 187 to 353 (IDITHIVMNL…IIFVCCLLHN (167 aa)) enclose the DDE Tnp4 domain. Positions 188, 240, and 279 each coordinate a divalent metal cation.

The protein belongs to the HARBI1 family. Requires a divalent metal cation as cofactor.

Its subcellular location is the nucleus. Functionally, transposase-derived protein that may have nuclease activity. The protein is Protein ALP1-like of Arabidopsis thaliana (Mouse-ear cress).